We begin with the raw amino-acid sequence, 256 residues long: Imidazole glycerol phosphate synthase subunit HisF (256 aa).

Residues D11 and D130 contribute to the active site.

It belongs to the HisA/HisF family. In terms of assembly, heterodimer of HisH and HisF.

It is found in the cytoplasm. It carries out the reaction 5-[(5-phospho-1-deoxy-D-ribulos-1-ylimino)methylamino]-1-(5-phospho-beta-D-ribosyl)imidazole-4-carboxamide + L-glutamine = D-erythro-1-(imidazol-4-yl)glycerol 3-phosphate + 5-amino-1-(5-phospho-beta-D-ribosyl)imidazole-4-carboxamide + L-glutamate + H(+). The protein operates within amino-acid biosynthesis; L-histidine biosynthesis; L-histidine from 5-phospho-alpha-D-ribose 1-diphosphate: step 5/9. IGPS catalyzes the conversion of PRFAR and glutamine to IGP, AICAR and glutamate. The HisF subunit catalyzes the cyclization activity that produces IGP and AICAR from PRFAR using the ammonia provided by the HisH subunit. In Cupriavidus necator (strain ATCC 17699 / DSM 428 / KCTC 22496 / NCIMB 10442 / H16 / Stanier 337) (Ralstonia eutropha), this protein is Imidazole glycerol phosphate synthase subunit HisF.